The following is a 193-amino-acid chain: Pyridoxal 5'-phosphate synthase subunit PdxT (193 aa).

An L-glutamine-binding site is contributed by 48 to 50 (GES). Cysteine 80 functions as the Nucleophile in the catalytic mechanism. L-glutamine is bound by residues arginine 109 and 137–138 (IR). Residues histidine 173 and glutamate 175 each act as charge relay system in the active site.

The protein belongs to the glutaminase PdxT/SNO family. In the presence of PdxS, forms a dodecamer of heterodimers. Only shows activity in the heterodimer.

It carries out the reaction aldehydo-D-ribose 5-phosphate + D-glyceraldehyde 3-phosphate + L-glutamine = pyridoxal 5'-phosphate + L-glutamate + phosphate + 3 H2O + H(+). It catalyses the reaction L-glutamine + H2O = L-glutamate + NH4(+). It functions in the pathway cofactor biosynthesis; pyridoxal 5'-phosphate biosynthesis. In terms of biological role, catalyzes the hydrolysis of glutamine to glutamate and ammonia as part of the biosynthesis of pyridoxal 5'-phosphate. The resulting ammonia molecule is channeled to the active site of PdxS. The protein is Pyridoxal 5'-phosphate synthase subunit PdxT of Mycobacteroides abscessus (strain ATCC 19977 / DSM 44196 / CCUG 20993 / CIP 104536 / JCM 13569 / NCTC 13031 / TMC 1543 / L948) (Mycobacterium abscessus).